Reading from the N-terminus, the 353-residue chain is Photosystem II protein D1 (353 aa).

An N-acetylthreonine modification is found at Thr2. Thr2 carries the post-translational modification Phosphothreonine. A run of 3 helical transmembrane segments spans residues 29–46 (YIGWFGVLMIPTLLTATS), 118–133 (HFLLGVACYMGREWEL), and 142–156 (WIAVAYSAPVAAATA). His118 contributes to the chlorophyll a binding site. Tyr126 is a binding site for pheophytin a. [CaMn4O5] cluster-binding residues include Asp170 and Glu189. The helical transmembrane segment at 197–218 (FHMLGVAGVFGGSLFSAMHGSL) threads the bilayer. A chlorophyll a-binding site is contributed by His198. A quinone contacts are provided by residues His215 and 264–265 (SF). His215 serves as a coordination point for Fe cation. Residue His272 participates in Fe cation binding. Residues 274 to 288 (FLAAWPVVGIWFTAL) traverse the membrane as a helical segment. Residues His332, Glu333, Asp342, and Ala344 each contribute to the [CaMn4O5] cluster site. Positions 345–353 (AVEVPSING) are excised as a propeptide.

Belongs to the reaction center PufL/M/PsbA/D family. PSII is composed of 1 copy each of membrane proteins PsbA, PsbB, PsbC, PsbD, PsbE, PsbF, PsbH, PsbI, PsbJ, PsbK, PsbL, PsbM, PsbT, PsbX, PsbY, PsbZ, Psb30/Ycf12, at least 3 peripheral proteins of the oxygen-evolving complex and a large number of cofactors. It forms dimeric complexes. The cofactor is The D1/D2 heterodimer binds P680, chlorophylls that are the primary electron donor of PSII, and subsequent electron acceptors. It shares a non-heme iron and each subunit binds pheophytin, quinone, additional chlorophylls, carotenoids and lipids. D1 provides most of the ligands for the Mn4-Ca-O5 cluster of the oxygen-evolving complex (OEC). There is also a Cl(-1) ion associated with D1 and D2, which is required for oxygen evolution. The PSII complex binds additional chlorophylls, carotenoids and specific lipids.. In terms of processing, tyr-161 forms a radical intermediate that is referred to as redox-active TyrZ, YZ or Y-Z. C-terminally processed by CTPA; processing is essential to allow assembly of the oxygen-evolving complex and thus photosynthetic growth.

Its subcellular location is the plastid. The protein resides in the chloroplast thylakoid membrane. The enzyme catalyses 2 a plastoquinone + 4 hnu + 2 H2O = 2 a plastoquinol + O2. Photosystem II (PSII) is a light-driven water:plastoquinone oxidoreductase that uses light energy to abstract electrons from H(2)O, generating O(2) and a proton gradient subsequently used for ATP formation. It consists of a core antenna complex that captures photons, and an electron transfer chain that converts photonic excitation into a charge separation. The D1/D2 (PsbA/PsbD) reaction center heterodimer binds P680, the primary electron donor of PSII as well as several subsequent electron acceptors. This Cucumis sativus (Cucumber) protein is Photosystem II protein D1.